The sequence spans 243 residues: Venom nerve growth factor 5 (243 aa).

Residues M1 to A18 form the signal peptide. The propeptide occupies A19–R125. The segment covering G47–D66 has biased composition (basic and acidic residues). The segment at G47–Q67 is disordered. 3 cysteine pairs are disulfide-bonded: C139–C204, C182–C232, and C192–C234. N-linked (GlcNAc...) asparagine glycosylation is present at N148.

The protein belongs to the NGF-beta family. As to quaternary structure, homodimer; non-covalently linked. Expressed by the venom gland.

The protein localises to the secreted. Its function is as follows. Nerve growth factor is important for the development and maintenance of the sympathetic and sensory nervous systems. It stimulates division and differentiation of sympathetic and embryonic sensory neurons as well as basal forebrain cholinergic neurons in the brain. Its relevance in the snake venom is not clear. However, it has been shown to inhibit metalloproteinase-dependent proteolysis of platelet glycoprotein Ib alpha, suggesting a metalloproteinase inhibition to prevent metalloprotease autodigestion and/or protection against prey proteases. Binds a lipid between the two protein chains in the homodimer. The lipid-bound form promotes histamine relase from mouse mast cells, contrary to the lipid-free form. This is Venom nerve growth factor 5 from Tropidechis carinatus (Australian rough-scaled snake).